A 374-amino-acid polypeptide reads, in one-letter code: MIFLPDFSEKIRKFYLNLSIKIEKIKTLSKINLYCYINLFYRTNIQMSLEISVLGTKKSLSSILGNSNESSKETTTYKSQNQQFQSQSIHTQQKIIEKKYDNQNDRFQRDVFSRPNVKPSNTQSLQARVNMANSYDRNSLAWIVECLKTEVMNRGLNSINQNLHSSDIELLKNFKTKFTNYQNNWNGLMGFMMKNIVKIDDKYMLHNFFGIKEIVVNQIINISLSYILIGAPIENEIKLFILNTVPLAFNTIHVINTKISKINRTIEELSSQKQYNSYTIQEFESEIKTNPKIKNNHTKEKLLKLHSEQKSLSEKINKLSGEKDIEQSMINNEIYKLVTGLSFNYFMHDDWCPPLDNNIIKETQTKSNIISLFF.

Residues T298–N332 are a coiled coil.

This is an uncharacterized protein from Acanthamoeba polyphaga (Amoeba).